Here is an 897-residue protein sequence, read N- to C-terminus: Putative POM121-like protein 1-like (897 aa).

A compositionally biased stretch (basic and acidic residues) spans 1–19 (MPEQDKDPRVQENPDDQRT). Disordered stretches follow at residues 1-177 (MPEQ…LPPP), 211-252 (IPDC…PKSQ), 266-302 (EVPS…RDTA), 315-348 (ASRD…GSLL), 362-469 (ATAA…ASRP), 484-522 (DCRP…RPKS), 536-612 (AEVP…LPPS), 642-741 (AQRS…ASRP), 753-793 (AISD…DRPK), and 812-856 (STAP…APFT). The segment covering 54 to 65 (LHAQSSEIRYNH) has biased composition (polar residues). Low complexity predominate over residues 66–76 (TSQTSWTSSST). 3 stretches are compositionally biased toward polar residues: residues 77–89 (KRNA…SSTG), 103–114 (SRCQLTLSYSKT), and 219–228 (PSHTLSSLAT). 4 stretches are compositionally biased toward polar residues: residues 376 to 385 (NQRSQTSRTR), 417 to 430 (SHCQ…NTVS), 490 to 499 (PSHTLSSLAT), and 556 to 579 (FSSS…TSLI). Low complexity predominate over residues 599-612 (TSAPAAAAAALPPS). 4 stretches are compositionally biased toward polar residues: residues 650–676 (NQRS…STEG), 689–702 (SHCQ…NTVS), 762–771 (PSHTLSSLAT), and 828–849 (FSSS…QDTS). Residues 877–897 (LGLFLLVFSFFFLLTWASFSF) form a helical membrane-spanning segment.

This sequence belongs to the POM121 family.

The protein localises to the membrane. This chain is Putative POM121-like protein 1-like, found in Homo sapiens (Human).